The following is a 326-amino-acid chain: Tagatose 1,6-diphosphate aldolase (326 aa).

Belongs to the aldolase LacD family.

The catalysed reaction is D-tagatofuranose 1,6-bisphosphate = D-glyceraldehyde 3-phosphate + dihydroxyacetone phosphate. It participates in carbohydrate metabolism; D-tagatose 6-phosphate degradation; D-glyceraldehyde 3-phosphate and glycerone phosphate from D-tagatose 6-phosphate: step 2/2. This is Tagatose 1,6-diphosphate aldolase from Staphylococcus aureus (strain bovine RF122 / ET3-1).